The following is a 418-amino-acid chain: Serine hydroxymethyltransferase (418 aa).

(6S)-5,6,7,8-tetrahydrofolate-binding positions include L120 and 124–126 (GHL). K229 bears the N6-(pyridoxal phosphate)lysine mark. 353–355 (SPF) is a (6S)-5,6,7,8-tetrahydrofolate binding site.

It belongs to the SHMT family. Homodimer. Pyridoxal 5'-phosphate serves as cofactor.

The protein localises to the cytoplasm. It catalyses the reaction (6R)-5,10-methylene-5,6,7,8-tetrahydrofolate + glycine + H2O = (6S)-5,6,7,8-tetrahydrofolate + L-serine. It participates in one-carbon metabolism; tetrahydrofolate interconversion. It functions in the pathway amino-acid biosynthesis; glycine biosynthesis; glycine from L-serine: step 1/1. In terms of biological role, catalyzes the reversible interconversion of serine and glycine with tetrahydrofolate (THF) serving as the one-carbon carrier. This reaction serves as the major source of one-carbon groups required for the biosynthesis of purines, thymidylate, methionine, and other important biomolecules. Also exhibits THF-independent aldolase activity toward beta-hydroxyamino acids, producing glycine and aldehydes, via a retro-aldol mechanism. The chain is Serine hydroxymethyltransferase from Psychrobacter cryohalolentis (strain ATCC BAA-1226 / DSM 17306 / VKM B-2378 / K5).